Here is a 272-residue protein sequence, read N- to C-terminus: Ribosome maturation factor RimP (272 aa).

The tract at residues 209-272 (QNLGILPPPP…RGDIDPPEGD (64 aa)) is disordered. The segment covering 250 to 266 (NTKEHRLAAERLRRGDI) has biased composition (basic and acidic residues).

Belongs to the RimP family.

It is found in the cytoplasm. In terms of biological role, required for maturation of 30S ribosomal subunits. The polypeptide is Ribosome maturation factor RimP (Rhodopseudomonas palustris (strain BisA53)).